We begin with the raw amino-acid sequence, 204 residues long: Venom allergen 5 (204 aa).

Intrachain disulfides connect C4-C17, C8-C101, C26-C94, and C170-C187. In terms of domain architecture, SCP spans 45-189 (LKEHNDFRQK…WHKHYLVCNY (145 aa)).

It belongs to the CRISP family. Venom allergen 5-like subfamily. Expressed by the venom gland.

It localises to the secreted. The chain is Venom allergen 5 from Vespula pensylvanica (Western yellow jacket).